The following is a 1070-amino-acid chain: DNA-directed RNA polymerase subunit beta (1070 aa).

Belongs to the RNA polymerase beta chain family. As to quaternary structure, in plastids the minimal PEP RNA polymerase catalytic core is composed of four subunits: alpha, beta, beta', and beta''. When a (nuclear-encoded) sigma factor is associated with the core the holoenzyme is formed, which can initiate transcription.

Its subcellular location is the plastid. The protein resides in the chloroplast. The catalysed reaction is RNA(n) + a ribonucleoside 5'-triphosphate = RNA(n+1) + diphosphate. Its function is as follows. DNA-dependent RNA polymerase catalyzes the transcription of DNA into RNA using the four ribonucleoside triphosphates as substrates. This chain is DNA-directed RNA polymerase subunit beta, found in Spinacia oleracea (Spinach).